Consider the following 105-residue polypeptide: UPF0145 protein Ping_0381 (105 aa).

Belongs to the UPF0145 family.

The chain is UPF0145 protein Ping_0381 from Psychromonas ingrahamii (strain DSM 17664 / CCUG 51855 / 37).